Here is a 792-residue protein sequence, read N- to C-terminus: Lon protease (792 aa).

Positions 16–211 constitute a Lon N-terminal domain; sequence DAVVVVPVSN…KVSAFLAQRL (196 aa). Residue 361-368 participates in ATP binding; the sequence is GPPGVGKT. The region spanning 597–778 is the Lon proteolytic domain; it reads TSVPGVATGL…EDAIEAGLDP (182 aa). Residues serine 684 and lysine 727 contribute to the active site.

It belongs to the peptidase S16 family. As to quaternary structure, homohexamer. Organized in a ring with a central cavity.

The protein localises to the cytoplasm. It carries out the reaction Hydrolysis of proteins in presence of ATP.. ATP-dependent serine protease that mediates the selective degradation of mutant and abnormal proteins as well as certain short-lived regulatory proteins. Required for cellular homeostasis and for survival from DNA damage and developmental changes induced by stress. Degrades polypeptides processively to yield small peptide fragments that are 5 to 10 amino acids long. Binds to DNA in a double-stranded, site-specific manner. The sequence is that of Lon protease from Phenylobacterium zucineum (strain HLK1).